The chain runs to 587 residues: ATP-dependent lipid A-core flippase (587 aa).

The next 5 membrane-spanning stretches (helical) occupy residues 31-51 (LIAS…LIYL), 68-88 (LKIM…TNFI), 145-165 (GSLI…AVMF), 169-189 (WELT…ITIV), and 259-279 (VQII…TPLI). The ABC transmembrane type-1 domain occupies 32–315 (IASGIALVFN…LTNVNSQFQR (284 aa)). The ABC transporter domain occupies 347–583 (LEFKNVSFAY…NGAYKQLYSM (237 aa)). Residue 381 to 388 (GRSGSGKS) coordinates ATP.

The protein belongs to the ABC transporter superfamily. Lipid exporter (TC 3.A.1.106) family. In terms of assembly, homodimer.

The protein resides in the cell inner membrane. It carries out the reaction ATP + H2O + lipid A-core oligosaccharideSide 1 = ADP + phosphate + lipid A-core oligosaccharideSide 2.. Involved in lipopolysaccharide (LPS) biosynthesis. Translocates lipid A-core from the inner to the outer leaflet of the inner membrane. Transmembrane domains (TMD) form a pore in the inner membrane and the ATP-binding domain (NBD) is responsible for energy generation. In Haemophilus influenzae (strain 86-028NP), this protein is ATP-dependent lipid A-core flippase.